Consider the following 266-residue polypeptide: Putative tyrosine phosphatase 197R (266 aa).

A Tyrosine-protein phosphatase domain is found at arginine 15 to aspartate 167. Catalysis depends on cysteine 111, which acts as the Phosphocysteine intermediate.

This sequence belongs to the protein-tyrosine phosphatase family.

It carries out the reaction O-phospho-L-tyrosyl-[protein] + H2O = L-tyrosyl-[protein] + phosphate. The sequence is that of Putative tyrosine phosphatase 197R from Invertebrate iridescent virus 6 (IIV-6).